Consider the following 563-residue polypeptide: Sulfite reductase [NADPH] hemoprotein beta-component (563 aa).

[4Fe-4S] cluster contacts are provided by Cys426, Cys432, Cys472, and Cys476. Cys476 is a siroheme binding site.

It belongs to the nitrite and sulfite reductase 4Fe-4S domain family. Alpha(8)-beta(8). The alpha component is a flavoprotein, the beta component is a hemoprotein. Siroheme serves as cofactor. The cofactor is [4Fe-4S] cluster.

It carries out the reaction hydrogen sulfide + 3 NADP(+) + 3 H2O = sulfite + 3 NADPH + 4 H(+). The protein operates within sulfur metabolism; hydrogen sulfide biosynthesis; hydrogen sulfide from sulfite (NADPH route): step 1/1. Component of the sulfite reductase complex that catalyzes the 6-electron reduction of sulfite to sulfide. This is one of several activities required for the biosynthesis of L-cysteine from sulfate. The protein is Sulfite reductase [NADPH] hemoprotein beta-component of Photobacterium profundum (strain SS9).